The following is a 502-amino-acid chain: Reduced meiotic recombination protein C1442.04c (502 aa).

Ser328, Ser330, and Ser331 each carry phosphoserine. 3 disordered regions span residues 353-391, 420-440, and 454-502; these read NDLNNEEPNSVVAEDGSEIITLDENDQSPNEATEKLRDN, GSLNNADLSQEPITNDGENVD, and ESAF…PSDD. Positions 367 to 378 are enriched in acidic residues; the sequence is DGSEIITLDEND. Composition is skewed to polar residues over residues 420-436 and 462-477; these read GSLNNADLSQEPITNDG and GTINSSKRRLSVTTDT.

It belongs to the RMR1 family.

It is found in the cytoplasm. The protein localises to the nucleus. Functionally, required for normal levels of gene conversion events during meiosis. The protein is Reduced meiotic recombination protein C1442.04c of Schizosaccharomyces pombe (strain 972 / ATCC 24843) (Fission yeast).